A 594-amino-acid chain; its full sequence is Protein REBELOTE (594 aa).

The span at 1–13 (MGKLGKKARKFAK) shows a compositional bias: basic residues. Disordered regions lie at residues 1 to 21 (MGKL…SVEK) and 35 to 58 (AKRN…PKKR). 3 consecutive short sequence motifs (nuclear localization signal) follow at residues 8–15 (ARKFAKKN), 35–42 (AKRNERHQ), and 512–519 (LKKFHERS). Residues 36–58 (KRNERHQAGDKQEKKVEQQPKKR) are compositionally biased toward basic and acidic residues.

This sequence belongs to the NOC2 family. Interacts with SWA2, NOC2 and NOC3 in both the nucleolus and nucleoplasm. Binds to ENAP1 and OBE1. Expressed at low levels in roots, shoots, leaves, stems, inflorescences, flowers and siliques, with highest levels dividing tissues.

It localises to the nucleus. Its subcellular location is the nucleolus. The protein resides in the nucleoplasm. In terms of biological role, collaboratively with CYP40/SQN and ULT1, influences floral meristem (FM) determinacy in an AGAMOUS and SUPERMAN-dependent manner, thus contributing to the floral developmental homeostasis. The polypeptide is Protein REBELOTE (Arabidopsis thaliana (Mouse-ear cress)).